A 197-amino-acid chain; its full sequence is ATP-dependent Clp protease proteolytic subunit 1 (197 aa).

Catalysis depends on serine 88, which acts as the Nucleophile. The active site involves histidine 113.

The protein belongs to the peptidase S14 family. In terms of assembly, fourteen ClpP subunits assemble into 2 heptameric rings which stack back to back to give a disk-like structure with a central cavity, resembling the structure of eukaryotic proteasomes.

Its subcellular location is the cytoplasm. It catalyses the reaction Hydrolysis of proteins to small peptides in the presence of ATP and magnesium. alpha-casein is the usual test substrate. In the absence of ATP, only oligopeptides shorter than five residues are hydrolyzed (such as succinyl-Leu-Tyr-|-NHMec, and Leu-Tyr-Leu-|-Tyr-Trp, in which cleavage of the -Tyr-|-Leu- and -Tyr-|-Trp bonds also occurs).. Functionally, cleaves peptides in various proteins in a process that requires ATP hydrolysis. Has a chymotrypsin-like activity. Plays a major role in the degradation of misfolded proteins. The sequence is that of ATP-dependent Clp protease proteolytic subunit 1 from Leifsonia xyli subsp. xyli (strain CTCB07).